The chain runs to 1009 residues: Protein-tyrosine kinase 2-beta (1009 aa).

Residues Arg39 to Lys359 enclose the FERM domain. A phosphoserine mark is found at Ser361, Ser375, and Ser399. Residue Tyr402 is modified to Phosphotyrosine; by autocatalysis. The region spanning Val425–Tyr683 is the Protein kinase domain. ATP-binding positions include Leu431–Val439, Lys457, and Glu503–Glu509. Asp549 functions as the Proton acceptor in the catalytic mechanism. Tyr579 carries the phosphotyrosine modification. Tyr580 bears the Phosphotyrosine; by SRC, FYN and LCK mark. The disordered stretch occupies residues Asn696–Thr728. Pro residues predominate over residues Glu712–Gln727. Tyr722 is subject to Phosphotyrosine. Phosphoserine is present on Ser762. Position 765 is a phosphothreonine (Thr765). An interaction with TGFB1I1 region spans residues Lys801–Glu1009. At Tyr834 the chain carries Phosphotyrosine. Position 839 is a phosphoserine (Ser839). A Phosphothreonine modification is found at Thr842. The residue at position 849 (Tyr849) is a Phosphotyrosine. Ser866 is modified (phosphoserine). The segment at Gln868 to Glu1009 is focal adhesion targeting (FAT). Residue Tyr881 is modified to Phosphotyrosine.

The protein belongs to the protein kinase superfamily. Tyr protein kinase family. FAK subfamily. As to quaternary structure, homodimer, or homooligomer. Interacts with KCNA2. Interacts with NPHP1, ASAP1, ASAP2, ARHGAP26, SKAP2 and TGFB1I1. The Tyr-402 phosphorylated form interacts with SRC (via SH2 domain) and SRC family members. Forms a signaling complex with EPHA1, LCK and phosphatidylinositol 3-kinase; upon activation by EFNA1. Interacts with GRB2 (via SH2 domain). Interacts with P53/TP53 and MDM2. Interacts with MYLK. Interacts with BCAR1. Interacts with RB1CC1. Interacts with RHOU. Interacts with VAV1. Interacts with PDPK1. Interacts with DLG4. Interacts with LPXN and PTPN12. Interacts with SIRPA and SH2D3C. Interacts (hypophosphorylated) with PXN. Interacts with ARHGAP10. Phosphorylated on tyrosine residues in response to various stimuli that elevate the intracellular calcium concentration; this activation is indirect and may be mediated by production of reactive oxygen species (ROS). Tyr-402 is the major autophosphorylation site, but other kinases can also phosphorylate Tyr-402. Autophosphorylation occurs in trans, i.e. one subunit of the dimeric receptor phosphorylates tyrosine residues on the other subunit. Phosphorylation at Tyr-402 promotes interaction with SRC and SRC family members, leading to phosphorylation at Tyr-579; Tyr-580 and Tyr-881. Phosphorylation at Tyr-881 is important for interaction with GRB2. Phosphorylated on tyrosine residues upon activation of FGR and PKC. Recruitment by NPHP1 to cell matrix adhesions initiates Tyr-402 phosphorylation. In monocytes, adherence to substrata is required for tyrosine phosphorylation and kinase activation. Angiotensin II, thapsigargin and L-alpha-lysophosphatidic acid (LPA) also induce autophosphorylation and increase kinase activity. Phosphorylation by MYLK promotes ITGB2 activation and is thus essential to trigger neutrophil transmigration during lung injury. Dephosphorylated by PTPN12.

It localises to the cytoplasm. Its subcellular location is the perinuclear region. The protein localises to the cell membrane. The protein resides in the cell junction. It is found in the focal adhesion. It localises to the cell projection. Its subcellular location is the lamellipodium. The protein localises to the cell cortex. The protein resides in the nucleus. It carries out the reaction L-tyrosyl-[protein] + ATP = O-phospho-L-tyrosyl-[protein] + ADP + H(+). Its activity is regulated as follows. Activated in response to stimuli that lead to increased intracellular Ca(2+) levels; this activation is indirect and may be mediated by calcium-mediated production of reactive oxygen species (ROS). Activated by autophosphorylation at Tyr-402; this creates a binding site for SRC family kinases and leads to phosphorylation at additional tyrosine residues. Phosphorylation at Tyr-402, Tyr-579 and Tyr-580 is required for optimal kinase activity. Non-receptor protein-tyrosine kinase that regulates reorganization of the actin cytoskeleton, cell polarization, cell migration, adhesion, spreading and bone remodeling. Plays a role in the regulation of the humoral immune response, and is required for normal levels of marginal B-cells in the spleen and normal migration of splenic B-cells. Required for normal macrophage polarization and migration towards sites of inflammation. Regulates cytoskeleton rearrangement and cell spreading in T-cells, and contributes to the regulation of T-cell responses. Promotes osteoclastic bone resorption; this requires both PTK2B/PYK2 and SRC. May inhibit differentiation and activity of osteoprogenitor cells. Functions in signaling downstream of integrin and collagen receptors, immune receptors, G-protein coupled receptors (GPCR), cytokine, chemokine and growth factor receptors, and mediates responses to cellular stress. Forms multisubunit signaling complexes with SRC and SRC family members upon activation; this leads to the phosphorylation of additional tyrosine residues, creating binding sites for scaffold proteins, effectors and substrates. Regulates numerous signaling pathways. Promotes activation of phosphatidylinositol 3-kinase and of the AKT1 signaling cascade. Promotes activation of NOS3. Regulates production of the cellular messenger cGMP. Promotes activation of the MAP kinase signaling cascade, including activation of MAPK1/ERK2, MAPK3/ERK1 and MAPK8/JNK1. Promotes activation of Rho family GTPases, such as RHOA and RAC1. Recruits the ubiquitin ligase MDM2 to P53/TP53 in the nucleus, and thereby regulates P53/TP53 activity, P53/TP53 ubiquitination and proteasomal degradation. Acts as a scaffold, binding to both PDPK1 and SRC, thereby allowing SRC to phosphorylate PDPK1 at 'Tyr-9, 'Tyr-373', and 'Tyr-376'. Promotes phosphorylation of NMDA receptors by SRC family members, and thereby contributes to the regulation of NMDA receptor ion channel activity and intracellular Ca(2+) levels. May also regulate potassium ion transport by phosphorylation of potassium channel subunits. Phosphorylates SRC; this increases SRC kinase activity. Phosphorylates ASAP1, NPHP1, KCNA2 and SHC1. Promotes phosphorylation of ASAP2, RHOU and PXN; this requires both SRC and PTK2/PYK2. This chain is Protein-tyrosine kinase 2-beta (Ptk2b), found in Mus musculus (Mouse).